The primary structure comprises 144 residues: MSGDEAAPVVVPPPVAEPAAIPEDMDLMTALELTLRKARAYGGVVRGLHECAKLIEKRVAQLVVLAEDCNQPDYVKLVKALCADHEVRLLTVPSAKTLGEWAGLCKIDSEGNARKVVGCSCLVVKDFGEETTALSIVNKHIASQ.

Serine 2 bears the N-acetylserine mark.

The protein belongs to the eukaryotic ribosomal protein eS12 family.

The polypeptide is Small ribosomal subunit protein eS12z (RPS12A) (Arabidopsis thaliana (Mouse-ear cress)).